Here is an 851-residue protein sequence, read N- to C-terminus: Periplasmic nitrate reductase (851 aa).

A signal peptide (tat-type signal) is located at residues 1–29; sequence MQSNRRDFLKAQALAASAAAAGIPIVVEA. The 4Fe-4S Mo/W bis-MGD-type domain occupies 44–100; sequence VRWDKAPCRFCGTGCAVMVGVQEGKVVATQGDPEAPVNRGLNCIKGYFLSKIMYGRD. Residues cysteine 51, cysteine 54, cysteine 58, and cysteine 86 each contribute to the [4Fe-4S] cluster site. Residues lysine 88, glutamine 155, asparagine 180, cysteine 184, 217–224, 248–252, and 267–269 contribute to the Mo-bis(molybdopterin guanine dinucleotide) site; these read WGSNMAEM, STYEH, and QTD. The tract at residues 317-338 is disordered; sequence DATSNGYPGADGKPKGNPNDST. Residues methionine 388, glutamine 392, asparagine 498, 524 to 525, lysine 547, aspartate 574, and 741 to 750 contribute to the Mo-bis(molybdopterin guanine dinucleotide) site; these read SD and TGRVLEHWHT. Phenylalanine 817 is a binding site for substrate. The Mo-bis(molybdopterin guanine dinucleotide) site is built by asparagine 825 and lysine 842.

Belongs to the prokaryotic molybdopterin-containing oxidoreductase family. NasA/NapA/NarB subfamily. As to quaternary structure, component of the periplasmic nitrate reductase NapAB complex composed of NapA and NapB. The cofactor is [4Fe-4S] cluster. Mo-bis(molybdopterin guanine dinucleotide) serves as cofactor. In terms of processing, predicted to be exported by the Tat system. The position of the signal peptide cleavage has not been experimentally proven.

Its subcellular location is the periplasm. The enzyme catalyses 2 Fe(II)-[cytochrome] + nitrate + 2 H(+) = 2 Fe(III)-[cytochrome] + nitrite + H2O. Functionally, catalytic subunit of the periplasmic nitrate reductase complex NapAB. Receives electrons from NapB and catalyzes the reduction of nitrate to nitrite. This is Periplasmic nitrate reductase from Leptothrix cholodnii (strain ATCC 51168 / LMG 8142 / SP-6) (Leptothrix discophora (strain SP-6)).